The sequence spans 234 residues: Zein-alpha A30 (234 aa).

Positions 1–21 are cleaved as a signal peptide; it reads MAAKIFCLLMLLGLSASAATA.

Belongs to the zein family.

Functionally, zeins are major seed storage proteins. The polypeptide is Zein-alpha A30 (Zea mays (Maize)).